We begin with the raw amino-acid sequence, 364 residues long: D-alanine--D-alanine ligase A (364 aa).

The 204-residue stretch at 145-348 folds into the ATP-grasp domain; sequence KRLLRDAGLN…YTDLISRLIE (204 aa). 175-230 contacts ATP; it reads ESRLGLPLFVKPANQGSSVGVSKVANEAQYQQAVALAFEFDHKVVVEQGIKGREIE. Residues D302, E315, and N317 each contribute to the Mg(2+) site.

Belongs to the D-alanine--D-alanine ligase family. Mg(2+) serves as cofactor. It depends on Mn(2+) as a cofactor.

Its subcellular location is the cytoplasm. It catalyses the reaction 2 D-alanine + ATP = D-alanyl-D-alanine + ADP + phosphate + H(+). The protein operates within cell wall biogenesis; peptidoglycan biosynthesis. Its function is as follows. Cell wall formation. In Salmonella typhi, this protein is D-alanine--D-alanine ligase A (ddlA).